The following is a 197-amino-acid chain: Probable S-adenosylmethionine-dependent methyltransferase MJ0882 (197 aa).

S-adenosyl-L-methionine is bound by residues 63 to 67 (GCGYG), Asp-84, and Asn-129. 129–132 (NPPI) is a substrate binding site.

The protein belongs to the methyltransferase superfamily.

Its function is as follows. Probable methyltransferase that uses S-adenosylmethionine as the methyl donor. Binds neither NAD nor NADP in vitro. This Methanocaldococcus jannaschii (strain ATCC 43067 / DSM 2661 / JAL-1 / JCM 10045 / NBRC 100440) (Methanococcus jannaschii) protein is Probable S-adenosylmethionine-dependent methyltransferase MJ0882.